A 447-amino-acid chain; its full sequence is Ribosomal protein uS12 methylthiotransferase RimO (447 aa).

Residues 4–114 enclose the MTTase N-terminal domain; it reads PKVGFVSLGC…VMEAVHEYVP (111 aa). [4Fe-4S] cluster-binding residues include C13, C49, C78, C147, C151, and C154. A Radical SAM core domain is found at 133–370; the sequence is LTPKHYAYLK…MQVQQQISAA (238 aa). A TRAM domain is found at 373–443; sequence QKRIGQTMTV…EYDLFAKLIK (71 aa).

The protein belongs to the methylthiotransferase family. RimO subfamily. It depends on [4Fe-4S] cluster as a cofactor.

The protein localises to the cytoplasm. The catalysed reaction is L-aspartate(89)-[ribosomal protein uS12]-hydrogen + (sulfur carrier)-SH + AH2 + 2 S-adenosyl-L-methionine = 3-methylsulfanyl-L-aspartate(89)-[ribosomal protein uS12]-hydrogen + (sulfur carrier)-H + 5'-deoxyadenosine + L-methionine + A + S-adenosyl-L-homocysteine + 2 H(+). Catalyzes the methylthiolation of an aspartic acid residue of ribosomal protein uS12. The chain is Ribosomal protein uS12 methylthiotransferase RimO from Acinetobacter baumannii (strain AB0057).